The sequence spans 169 residues: uncharacterized protein (169 aa).

This is an uncharacterized protein from Azospirillum brasilense.